Reading from the N-terminus, the 202-residue chain is Orotate phosphoribosyltransferase (202 aa).

5-phospho-alpha-D-ribose 1-diphosphate is bound by residues lysine 93 and 113–121 (EDIITTGGS). Positions 117 and 145 each coordinate orotate.

It belongs to the purine/pyrimidine phosphoribosyltransferase family. PyrE subfamily. Homodimer. It depends on Mg(2+) as a cofactor.

It catalyses the reaction orotidine 5'-phosphate + diphosphate = orotate + 5-phospho-alpha-D-ribose 1-diphosphate. It functions in the pathway pyrimidine metabolism; UMP biosynthesis via de novo pathway; UMP from orotate: step 1/2. Catalyzes the transfer of a ribosyl phosphate group from 5-phosphoribose 1-diphosphate to orotate, leading to the formation of orotidine monophosphate (OMP). This Campylobacter jejuni subsp. jejuni serotype O:2 (strain ATCC 700819 / NCTC 11168) protein is Orotate phosphoribosyltransferase.